We begin with the raw amino-acid sequence, 1518 residues long: WD repeat-containing protein 62 (1518 aa).

A2 carries the post-translational modification N-acetylalanine. Phosphoserine is present on S33. Residue T46 is modified to Phosphothreonine. Residue S49 is modified to Phosphoserine. At T50 the chain carries Phosphothreonine. Position 52 is a phosphoserine (S52). WD repeat units lie at residues 109–150, 153–194, 196–234, 291–330, 357–396, 402–450, 490–529, 532–574, 578–618, 626–665, 671–713, and 714–752; these read TARK…QVAE, GHKY…VVAS, KVSCRVIALSFSEDSSYFVTVGNRHVRFWFLEVSTETKV, INLKVSLSSCLCVSQELIFCGCTDGIVRIFQAHSLHYLAN, AVYPDTVALTFDPIHQWLSCVYKDHSIYIWDVKDINRVGK, FHSS…DSHW, DVKAGVRVMQVSPDGQHLASGDRSGNLRIHELHFMDELVK, AHDA…NLEQ, DHSS…DGLH, AEKTTLYDMDIDITQKYVAVACQDRNVRVYNTVNGKQKKC, GDEG…KMFG, and HSEIITSMKFTYDCHHLITVSGDSCVFIWHLGPEITNCM. Position 501 is a phosphoserine (S501). Residues 762–772 are compositionally biased toward basic and acidic residues; it reads RQQQQHTNDKK. 2 disordered regions span residues 762 to 824 and 908 to 935; these read RQQQ…DPDP and ASLLSESESPQEAGRGHPSFLPQQKESS. Over residues 781–790 the composition is skewed to polar residues; it reads TYVSTPSEIH. Residues 797–809 show a composition bias toward acidic residues; the sequence is QTEDDLEEECEPE. Residues 803–846 form a WD 13 repeat; sequence EEECEPEEMLKTPSKDSLDPDPRCLLTNGKLPLWAKRLLGDDDV. Basic and acidic residues predominate over residues 810 to 824; that stretch reads EMLKTPSKDSLDPDP. A compositionally biased stretch (low complexity) spans 908-920; it reads ASLLSESESPQEA. S944 carries the phosphoserine modification. A disordered region spans residues 962 to 1055; it reads EVEAGPGDQQ…PSSSLPQTPE (94 aa). Composition is skewed to polar residues over residues 971-981 and 1045-1054; these read QGDSYLRVSSD and VPSSSLPQTP. T1053 is subject to Phosphothreonine. Phosphoserine occurs at positions 1070, 1093, 1101, 1123, 1144, 1228, 1248, and 1249. The WD 14 repeat unit spans residues 1132–1173; the sequence is GGSQPRAGTGYASPDRTHVLAAGKAEETLEAWRPPPPCLTSL. The WD 15 repeat unit spans residues 1255–1293; sequence SLGQELQAITTATTPSLDSEGQEPALRSWGNHEARANLR. T1268 carries the post-translational modification Phosphothreonine. The interval 1339 to 1377 is disordered; it reads FRPSLPAPESPGLPAHPSNPQLPEARPGIPGGTASLLEP.

As to quaternary structure, can form homodimers (via C-terminus). Interacts (via C-terminus) with MAPKBP1 (via C-terminus). Interacts with CDK5RAP2, CEP152, CEP63 and KIAA0753. CEP63, CDK5RAP2, CEP152, WDR62 are proposed to form a stepwise assembled complex at the centrosome forming a ring near parental centrioles. In terms of tissue distribution, present in fetal brain, enriched within the ventricular and subventricular zone (at protein level). In the embryonic brain it is expressed in mitotic neural precursor cells.

It localises to the nucleus. Its subcellular location is the cytoplasm. It is found in the cytoskeleton. The protein localises to the spindle pole. The protein resides in the microtubule organizing center. It localises to the centrosome. Its subcellular location is the centriole. Required for cerebral cortical development. Plays a role in neuronal proliferation and migration. Plays a role in mother-centriole-dependent centriole duplication; the function also seems to involve CEP152, CDK5RAP2 and CEP63 through a stepwise assembled complex at the centrosome that recruits CDK2 required for centriole duplication. The chain is WD repeat-containing protein 62 (WDR62) from Homo sapiens (Human).